Reading from the N-terminus, the 333-residue chain is tRNA(Ile)-lysidine synthase (333 aa).

33–38 (SGGADS) is an ATP binding site.

Belongs to the tRNA(Ile)-lysidine synthase family.

It is found in the cytoplasm. It carries out the reaction cytidine(34) in tRNA(Ile2) + L-lysine + ATP = lysidine(34) in tRNA(Ile2) + AMP + diphosphate + H(+). Functionally, ligates lysine onto the cytidine present at position 34 of the AUA codon-specific tRNA(Ile) that contains the anticodon CAU, in an ATP-dependent manner. Cytidine is converted to lysidine, thus changing the amino acid specificity of the tRNA from methionine to isoleucine. This chain is tRNA(Ile)-lysidine synthase, found in Salinispora arenicola (strain CNS-205).